A 277-amino-acid polypeptide reads, in one-letter code: Phosphatidylglycerol--prolipoprotein diacylglyceryl transferase (277 aa).

The next 4 membrane-spanning stretches (helical) occupy residues Trp-22–Ala-42, Ile-51–Tyr-71, Ile-89–Ile-109, and Ile-116–Gly-136. A 1,2-diacyl-sn-glycero-3-phospho-(1'-sn-glycerol) is bound at residue Arg-137. A run of 3 helical transmembrane segments spans residues Gln-177–Ile-197, Gly-205–Met-225, and Phe-235–Tyr-255.

This sequence belongs to the Lgt family.

The protein localises to the cell membrane. It catalyses the reaction L-cysteinyl-[prolipoprotein] + a 1,2-diacyl-sn-glycero-3-phospho-(1'-sn-glycerol) = an S-1,2-diacyl-sn-glyceryl-L-cysteinyl-[prolipoprotein] + sn-glycerol 1-phosphate + H(+). Its pathway is protein modification; lipoprotein biosynthesis (diacylglyceryl transfer). Catalyzes the transfer of the diacylglyceryl group from phosphatidylglycerol to the sulfhydryl group of the N-terminal cysteine of a prolipoprotein, the first step in the formation of mature lipoproteins. This Listeria welshimeri serovar 6b (strain ATCC 35897 / DSM 20650 / CCUG 15529 / CIP 8149 / NCTC 11857 / SLCC 5334 / V8) protein is Phosphatidylglycerol--prolipoprotein diacylglyceryl transferase.